The following is a 360-amino-acid chain: Threonine synthase (360 aa).

Lys69 is modified (N6-(pyridoxal phosphate)lysine). Residues Asn95, 196 to 200 (GNAGN), and Thr326 contribute to the pyridoxal 5'-phosphate site.

The protein belongs to the threonine synthase family. In terms of assembly, homodimer. Pyridoxal 5'-phosphate is required as a cofactor.

It carries out the reaction O-phospho-L-homoserine + H2O = L-threonine + phosphate. The protein operates within amino-acid biosynthesis; L-threonine biosynthesis; L-threonine from L-aspartate: step 5/5. Its function is as follows. Catalyzes the gamma-elimination of phosphate from L-phosphohomoserine and the beta-addition of water to produce L-threonine. In Mycobacterium bovis (strain ATCC BAA-935 / AF2122/97), this protein is Threonine synthase (thrC).